Here is a 185-residue protein sequence, read N- to C-terminus: MPRHQSYSLSDEDIIELVFRNYGVKITPEQIARAYAPEQRMSWKKSVEVARFIKGMTLKQAKTWLEDVVKLKRPVPIKTFKKKQAHHATPWEGWPVAKWPVKVARRFLQVLENLENNARFRGLDVDRVVIVHAAAHKGFKIPNIMPRAFGRATRFDEQTVNVELVAVELPKEVLPKRYKLNLVKR.

It belongs to the universal ribosomal protein uL22 family. In terms of assembly, part of the 50S ribosomal subunit.

Functionally, this protein binds specifically to 23S rRNA. It makes multiple contacts with different domains of the 23S rRNA in the assembled 50S subunit and ribosome. Its function is as follows. The globular domain of the protein is located near the polypeptide exit tunnel on the outside of the subunit, while an extended beta-hairpin is found that lines the wall of the exit tunnel in the center of the 70S ribosome. The polypeptide is Large ribosomal subunit protein uL22 (Pyrobaculum aerophilum (strain ATCC 51768 / DSM 7523 / JCM 9630 / CIP 104966 / NBRC 100827 / IM2)).